The primary structure comprises 1174 residues: Ribonucleoside-diphosphate reductase large subunit-like protein (1174 aa).

The RIP homotypic interaction motif (RHIM) signature appears at 50–72 (PYVRIMNGVSGIQIGNHNAMSIA). 2 disordered regions span residues 170 to 269 (ASNA…KLKP) and 291 to 325 (AAAAVAPESESSPAASAPPAAAAMATGGDDEDQSS). Low complexity-rich tracts occupy residues 182–202 (ATSGAGSAAATPAATTPAATA), 233–243 (HVSVGTQATPS), and 291–316 (AAAAVAPESESSPAASAPPAAAAMAT).

Belongs to the ribonucleoside diphosphate reductase large chain family. Self-assembles into homo-oligomeric amyloid fibrils. Interacts with host RIPK1 (via RIP homotypic interaction motif); this interaction inhibits RIPK1 ubiquitination thereby preventing effective activation of host NF-kappa-B. Interacts with host RIPK3 (via RIP homotypic interaction motif); this interaction disrupts RIPK3-RIPK1 interactions characteristic of TNF-alpha induced necroptosis, thereby suppressing this death pathway. Interacts (via RIP homotypic interaction motif) with host ZBP1 (via RIP homotypic interaction motif); this interaction inhibits recruitment of RIPK1 and RIPK3 to ZBP1 and prevents ZBP1-induced NF-kappa-B activation. Post-translationally, undergoes proteolytic cleavage, generating two peptides, a N-terminal and a 116 kDa. The N-terminal peptide retains RIPK1- and RIPK3-binding activity as well as cell death suppression activity.

Its subcellular location is the virion. It is found in the host cytoplasm. Provides optimal viral replication conditions by promoting host cell survival and avoiding the host inflammatory response linked to NF-kappa-B activation. Blocks RIPK1 ubiquitination, thereby preventing NF-kappa-B activation and virally induced inflammatory response. Prevents host necroptosis by targeting RIPK3 thereby preventing the formation of necroptotic RIPK1-RIPK3 complexes. Also inhibits ZBP1-induced necroptosis. Does not have ribonucleotide reductase activity. Betaherpesviruses probably use another strategy to expand the dNTP pool in a quiescent host cell. The protein is Ribonucleoside-diphosphate reductase large subunit-like protein of Murid herpesvirus 1 (strain Smith) (MuHV-1).